Here is a 452-residue protein sequence, read N- to C-terminus: Friend leukemia integration 1 transcription factor (452 aa).

Position 39 is a phosphoserine (serine 39). In terms of domain architecture, PNT spans 112–198 (PPPPNMTTNE…SHLSYLRESS (87 aa)). The tract at residues 209–271 (DQSSRLSVKE…PYQILGPTSS (63 aa)) is disordered. Residues 215–226 (SVKEDPSYDSVR) show a composition bias toward basic and acidic residues. Residues 248–257 (QTISKNTEQR) show a composition bias toward polar residues. Positions 281–361 (IQLWQFLLEL…HGKRYAYKFD (81 aa)) form a DNA-binding region, ETS. Positions 433-452 (NPNVPRHPNTHVPSHLGSYY) are disordered.

This sequence belongs to the ETS family. As to quaternary structure, can form homodimers or heterodimers with ETV6/TEL1.

It is found in the nucleus. Functionally, sequence-specific transcriptional activator. Recognizes the DNA sequence 5'-C[CA]GGAAGT-3'. The polypeptide is Friend leukemia integration 1 transcription factor (FLI1) (Homo sapiens (Human)).